A 735-amino-acid chain; its full sequence is Catalase-peroxidase (735 aa).

The tract at residues M1–D25 is disordered. Residues W95–Y223 constitute a cross-link (tryptophyl-tyrosyl-methioninium (Trp-Tyr) (with M-249)). H96 (proton acceptor) is an active-site residue. The segment at residues Y223 to M249 is a cross-link (tryptophyl-tyrosyl-methioninium (Tyr-Met) (with W-95)). H264 is a binding site for heme b.

The protein belongs to the peroxidase family. Peroxidase/catalase subfamily. Homodimer or homotetramer. It depends on heme b as a cofactor. Post-translationally, formation of the three residue Trp-Tyr-Met cross-link is important for the catalase, but not the peroxidase activity of the enzyme.

It carries out the reaction H2O2 + AH2 = A + 2 H2O. The catalysed reaction is 2 H2O2 = O2 + 2 H2O. In terms of biological role, bifunctional enzyme with both catalase and broad-spectrum peroxidase activity. This is Catalase-peroxidase from Trichlorobacter lovleyi (strain ATCC BAA-1151 / DSM 17278 / SZ) (Geobacter lovleyi).